Consider the following 154-residue polypeptide: Small ribosomal subunit protein eS10 (154 aa).

Positions 91 to 154 (ATMKKQASRP…ERSAPAPQQN (64 aa)) are disordered. Positions 124 to 135 (RGDRRQGGDRRG) are enriched in basic and acidic residues.

This sequence belongs to the eukaryotic ribosomal protein eS10 family.

Its subcellular location is the cytoplasm. The polypeptide is Small ribosomal subunit protein eS10 (rps10) (Dictyostelium discoideum (Social amoeba)).